A 344-amino-acid polypeptide reads, in one-letter code: Arginine N-succinyltransferase (344 aa).

Leu-125 contributes to the succinyl-CoA binding site. Residue His-229 is the Proton donor of the active site.

It belongs to the arginine N-succinyltransferase family.

It catalyses the reaction succinyl-CoA + L-arginine = N(2)-succinyl-L-arginine + CoA + H(+). It participates in amino-acid degradation; L-arginine degradation via AST pathway; L-glutamate and succinate from L-arginine: step 1/5. Its function is as follows. Catalyzes the transfer of succinyl-CoA to arginine to produce N(2)-succinylarginine. The chain is Arginine N-succinyltransferase from Escherichia coli (strain UTI89 / UPEC).